A 432-amino-acid polypeptide reads, in one-letter code: Adenylosuccinate synthetase (432 aa).

Residues 13-19 (GDEGKGK) and 41-43 (GHT) each bind GTP. The active-site Proton acceptor is the Asp-14. Asp-14 and Gly-41 together coordinate Mg(2+). IMP-binding positions include 14–17 (DEGK), 39–42 (NAGH), Thr-130, Arg-144, Gln-225, Thr-240, and Arg-304. His-42 functions as the Proton donor in the catalytic mechanism. 300-306 (STTGRPR) contacts substrate. GTP-binding positions include Arg-306, 332-334 (KLD), and 416-418 (STG).

This sequence belongs to the adenylosuccinate synthetase family. In terms of assembly, homodimer. Mg(2+) is required as a cofactor.

It is found in the cytoplasm. The enzyme catalyses IMP + L-aspartate + GTP = N(6)-(1,2-dicarboxyethyl)-AMP + GDP + phosphate + 2 H(+). It participates in purine metabolism; AMP biosynthesis via de novo pathway; AMP from IMP: step 1/2. In terms of biological role, plays an important role in the de novo pathway of purine nucleotide biosynthesis. Catalyzes the first committed step in the biosynthesis of AMP from IMP. The sequence is that of Adenylosuccinate synthetase from Nitrosomonas europaea (strain ATCC 19718 / CIP 103999 / KCTC 2705 / NBRC 14298).